A 66-amino-acid chain; its full sequence is Large ribosomal subunit protein bL33c (66 aa).

It belongs to the bacterial ribosomal protein bL33 family.

It is found in the plastid. In Epifagus virginiana (Beechdrops), this protein is Large ribosomal subunit protein bL33c (rpl33).